Consider the following 142-residue polypeptide: Potassium voltage-gated channel subfamily E regulatory beta subunit 5 (142 aa).

Residues N2 and N25 are each glycosylated (N-linked (GlcNAc...) asparagine). A helical transmembrane segment spans residues 61 to 81 (LYILLIMIFYACLAGGLILAY). Residues 82–142 (TRSRKLVEAK…PALAQGAERV (61 aa)) lie on the Cytoplasmic side of the membrane. A disordered region spans residues 119–142 (SQAEGRRQLASEGLPALAQGAERV).

This sequence belongs to the potassium channel KCNE family. As to quaternary structure, interacts with KCNQ1; impairs KCNQ1 localization in lipid rafts and only conducts current upon strong and continued depolarization. As to expression, highly expressed in heart, skeletal muscle, brain, spinal cord and placenta.

The protein resides in the membrane. Its function is as follows. Potassium channel ancillary subunit that is essential for generation of some native K(+) currents by virtue of formation of heteromeric ion channel complex with voltage-gated potassium (Kv) channel pore-forming alpha subunits. Functions as an inhibitory beta-subunit of the repolarizing cardiac potassium ion channel KCNQ1. The sequence is that of Potassium voltage-gated channel subfamily E regulatory beta subunit 5 (KCNE5) from Homo sapiens (Human).